Reading from the N-terminus, the 189-residue chain is Selenoprotein S (189 aa).

The helical transmembrane segment at 28–48 (SLLATYGWYIVFSCILLYVVF) threads the bilayer. Residues 78–90 (RQEALAAARLKMQ) are VCP/p97-interacting motif (VIM). The segment at 115–189 (KIEMWDSMQE…RRGPSSGGUG (75 aa)) is disordered. Ser-140 is subject to Phosphoserine. Over residues 159–173 (RGGGYNPLSGEGGGA) the composition is skewed to gly residues. Sec-188 is a non-standard amino acid (selenocysteine).

This sequence belongs to the selenoprotein S family. As to quaternary structure, interacts with DERL1 and (via VIM motif) with VCP, suggesting that it forms a membrane complex with DERL1 that serves as a receptor for VCP. Also interacts with DERL2, DERL3 and SELENOK. The SELENOK-SELENOS complex interacts with VCP. Interacts with CCDC47. Truncated SELENOS proteins produced by failed UGA/Sec decoding are ubiquitinated by the CRL2(KLHDC2) and CRL2(KLHDC3) complexes, which recognizes the glycine (Gly) at the C-terminus of truncated SELENOS proteins. Truncated SELENOS proteins produced by failed UGA/Sec decoding are also ubiquitinated by the CRL5(KLHDC1) complex.

The protein resides in the endoplasmic reticulum membrane. Its subcellular location is the cytoplasm. Involved in the degradation process of misfolded endoplasmic reticulum (ER) luminal proteins. Participates in the transfer of misfolded proteins from the ER to the cytosol, where they are destroyed by the proteasome in a ubiquitin-dependent manner. Probably acts by serving as a linker between DERL1, which mediates the retrotranslocation of misfolded proteins into the cytosol, and the ATPase complex VCP, which mediates the translocation and ubiquitination. This chain is Selenoprotein S, found in Homo sapiens (Human).